Reading from the N-terminus, the 298-residue chain is Ribonuclease HII (298 aa).

The tract at residues 1 to 57 is disordered; it reads MIREPQKSAKAASKSSAPRARSSVAKATSTKATSSKAASSKAAPSKAGADAGAAKPR. Positions 8–55 are enriched in low complexity; it reads SAKAASKSSAPRARSSVAKATSTKATSSKAASSKAAPSKAGADAGAAK. The RNase H type-2 domain occupies 85 to 273; the sequence is WPVAGCDEAG…VAAAWRKIEG (189 aa). A divalent metal cation-binding residues include D91, E92, and D182.

This sequence belongs to the RNase HII family. It depends on Mn(2+) as a cofactor. Requires Mg(2+) as cofactor.

The protein localises to the cytoplasm. It catalyses the reaction Endonucleolytic cleavage to 5'-phosphomonoester.. Functionally, endonuclease that specifically degrades the RNA of RNA-DNA hybrids. The polypeptide is Ribonuclease HII (Rhodopseudomonas palustris (strain BisB5)).